The following is a 95-amino-acid chain: Putative pterin-4-alpha-carbinolamine dehydratase (95 aa).

Belongs to the pterin-4-alpha-carbinolamine dehydratase family.

It catalyses the reaction (4aS,6R)-4a-hydroxy-L-erythro-5,6,7,8-tetrahydrobiopterin = (6R)-L-erythro-6,7-dihydrobiopterin + H2O. The sequence is that of Putative pterin-4-alpha-carbinolamine dehydratase from Nocardia farcinica (strain IFM 10152).